The following is a 136-amino-acid chain: Large ribosomal subunit protein uL16 (136 aa).

This sequence belongs to the universal ribosomal protein uL16 family. Part of the 50S ribosomal subunit.

Functionally, binds 23S rRNA and is also seen to make contacts with the A and possibly P site tRNAs. In Actinobacillus pleuropneumoniae serotype 5b (strain L20), this protein is Large ribosomal subunit protein uL16.